The sequence spans 130 residues: Endoglucanase 2 (130 aa).

Catalysis depends on residues histidine 47, aspartate 98, and glutamate 107.

This sequence belongs to the glycosyl hydrolase 9 (cellulase E) family.

It catalyses the reaction Endohydrolysis of (1-&gt;4)-beta-D-glucosidic linkages in cellulose, lichenin and cereal beta-D-glucans.. Its function is as follows. Involved in ripening fruit process. This chain is Endoglucanase 2 (CEL2), found in Persea americana (Avocado).